We begin with the raw amino-acid sequence, 219 residues long: uncharacterized protein (219 aa).

One can recognise an ACT domain in the interval 4 to 79; sequence GLRIIAENKI…YIIEIEEEES (76 aa).

This is an uncharacterized protein from Archaeoglobus fulgidus (strain ATCC 49558 / DSM 4304 / JCM 9628 / NBRC 100126 / VC-16).